Here is a 144-residue protein sequence, read N- to C-terminus: MRDVNCVGIVMGFDFGTKHIGVAIGQKLTCTAQPLTVLQSQSGVPNWKRIRDIYNTWKPMIFVVGLPLKIDGSEQPITILAKIFAIQLKELFPVPVKMHDERFSTSEARLNYFKYYHDDLCARSNIKINAIAAGVILKSWLNKS.

It belongs to the YqgF nuclease family.

Its subcellular location is the cytoplasm. Its function is as follows. Could be a nuclease involved in processing of the 5'-end of pre-16S rRNA. This chain is Putative pre-16S rRNA nuclease, found in Blochmanniella pennsylvanica (strain BPEN).